We begin with the raw amino-acid sequence, 332 residues long: T-cell surface glycoprotein CD1c3 (332 aa).

An N-terminal signal peptide occupies residues 1 to 17 (MLFLQFLFLDVVLGGSI). Residues 18–300 (TKNVVQENIS…IILYWGHGLS (283 aa)) lie on the Extracellular side of the membrane. N-linked (GlcNAc...) asparagine glycans are attached at residues Asn-25, Asn-38, Asn-75, and Asn-146. Cystine bridges form between Cys-120–Cys-184 and Cys-224–Cys-279. The region spanning 205-292 (PEVWLSSSPN…HSSLRDQDII (88 aa)) is the Ig-like domain. A helical membrane pass occupies residues 301–321 (VILITFAVIVPLVLLIILVLL). Topologically, residues 322 to 332 (CKKCCTYQGIP) are cytoplasmic.

As to quaternary structure, heterodimer with B2M (beta-2-microglobulin).

The protein localises to the cell membrane. Its subcellular location is the endosome membrane. Functionally, antigen-presenting protein that binds self and non-self lipid and glycolipid antigens and presents them to T-cell receptors on natural killer T-cells. The protein is T-cell surface glycoprotein CD1c3 (CD1C3) of Cavia porcellus (Guinea pig).